The primary structure comprises 425 residues: MHDIEYIRKNPEGFEKAMKSRGIRESTAEEILEIDHEKRSLTTKLQDLNRQRNEITEEIKKLKMSKSPCEEQIELSKSITNEIEAISLKEQAEKDKLVNVLSNLPNIPAQDVPIGADENSNLEVRRYGGKRQFDFVPESHYELGEKLGLMDFEQAARISGSRFTILKGQLAKLGRALINCMLEMHVNEFGYTEVYHPALVKNEAMYNVGQLPKFSDDSYLTTDELRLIPTSEVFLTNLVADKIMEEKELPIRFTAYSECFRKEAGSAGRDTRGMIRQHQFGKVELVSITTEDQSNDELERMTSVAEEILKKLELPYRVMLLCSGDMGFAAQRTYDIEVWLPGQNKYREISSCSNCGAFQARRMNTKYSSETDKKMKKYIHTLNGSALAIGRTIIAIMENYQNSDGSIAIPNVLQKYMSNDTVISK.

230–232 serves as a coordination point for L-serine; the sequence is TSE. 261–263 is a binding site for ATP; the sequence is RKE. Glutamate 284 contributes to the L-serine binding site. Position 348-351 (348-351) interacts with ATP; the sequence is EISS. Residue serine 385 coordinates L-serine.

The protein belongs to the class-II aminoacyl-tRNA synthetase family. Type-1 seryl-tRNA synthetase subfamily. In terms of assembly, homodimer. The tRNA molecule binds across the dimer.

It localises to the cytoplasm. It carries out the reaction tRNA(Ser) + L-serine + ATP = L-seryl-tRNA(Ser) + AMP + diphosphate + H(+). The enzyme catalyses tRNA(Sec) + L-serine + ATP = L-seryl-tRNA(Sec) + AMP + diphosphate + H(+). It functions in the pathway aminoacyl-tRNA biosynthesis; selenocysteinyl-tRNA(Sec) biosynthesis; L-seryl-tRNA(Sec) from L-serine and tRNA(Sec): step 1/1. In terms of biological role, catalyzes the attachment of serine to tRNA(Ser). Is also able to aminoacylate tRNA(Sec) with serine, to form the misacylated tRNA L-seryl-tRNA(Sec), which will be further converted into selenocysteinyl-tRNA(Sec). This chain is Serine--tRNA ligase, found in Wolbachia pipientis wMel.